A 1197-amino-acid polypeptide reads, in one-letter code: Envelopment polyprotein (1197 aa).

The first 16 residues, 1–16 (MYVLLTILTSVLVCEA), serve as a signal peptide directing secretion. Over 17–130 (IIRVSLSSTR…RDAKQIGRKT (114 aa)) the chain is Cytoplasmic. The tract at residues 131–153 (MAGIAMTVLPALAVFALAPVVFA) is internal signal sequence for glycoprotein N. Residues 154-582 (EDPHLRNRPG…GLINYQCHTA (429 aa)) are Lumenal-facing. 12 disulfide bridges follow: cysteine 179/cysteine 188, cysteine 229/cysteine 239, cysteine 250/cysteine 281, cysteine 271/cysteine 284, cysteine 304/cysteine 456, cysteine 322/cysteine 332, cysteine 374/cysteine 434, cysteine 402/cysteine 413, cysteine 420/cysteine 425, cysteine 479/cysteine 482, cysteine 486/cysteine 556, and cysteine 506/cysteine 511. Residues 583 to 603 (LSAFVVVFVFSSIAIICLAIL) form a helical membrane-spanning segment. Residues 604 to 673 (YRVLKCLKIA…APIPRHAPIP (70 aa)) are Cytoplasmic-facing. Residues 608–650 (KCLKIAPRKVLNPLMWITAFIRWIYKKMVARVADNINQVNREI) are golgi retention signal. Positions 646-650 (VNREI) are important for correct targeting of the glycoproteins to the Golgi complex but not for heterodimerization. The segment at 675–690 (YSTYLMLLLIVSYASA) is internal signal sequence for glycoprotein C. 12 disulfide bridges follow: cysteine 691–cysteine 731, cysteine 704–cysteine 713, cysteine 756–cysteine 852, cysteine 771–cysteine 965, cysteine 777–cysteine 825, cysteine 783–cysteine 832, cysteine 788–cysteine 814, cysteine 818–cysteine 823, cysteine 934–cysteine 947, cysteine 1029–cysteine 1101, cysteine 1039–cysteine 1042, and cysteine 1049–cysteine 1083. The Lumenal portion of the chain corresponds to 691–1159 (CSELIQASSR…MSWFGGPLKT (469 aa)). A fusion loop region spans residues 777–783 (CHLVGEC). N-linked (GlcNAc...) asparagine; by host glycosylation is present at asparagine 794. Residues 819–830 (GGWGCGCFNVNP) form a fusion loop region. N-linked (GlcNAc...) asparagine; by host glycosylation occurs at asparagine 1035. N-linked (GlcNAc...) asparagine; by host glycosylation occurs at asparagine 1077. Residues 1160–1180 (ILLICLYVALSIGLFFLLIYL) traverse the membrane as a helical segment. The Cytoplasmic portion of the chain corresponds to 1181-1197 (GGTGLSKMWLAATKKAS).

The protein belongs to the phlebovirus envelope glycoprotein family. In terms of assembly, heterodimer with glycoprotein C. Homotrimer (postfusion). Interacts with nucleocapsid protein N and with the polymerase L in order to package them into virus particles. Interacts with host E3 ubiquitin-protein ligase UBR4; this interaction is important for viral RNA production. Interacts with host LRP1; this interaction facilitates virus entry into the host cell. As to quaternary structure, heterodimer with glycoprotein C. In terms of processing, specific enzymatic cleavages in vivo yield mature proteins including NSm protein, Glycoprotein C, and Glycoprotein N. Glycosylated. The glycans can attach to host CD209/DC-SIGN, and may play a role in virus entry into dendritic cells. Post-translationally, palmitoylated.

The protein resides in the virion membrane. It localises to the host Golgi apparatus membrane. The protein localises to the host endoplasmic reticulum membrane. Its subcellular location is the host mitochondrion outer membrane. It is found in the host Golgi apparatus. The protein resides in the virion. In terms of biological role, structural component of the virion that interacts with glycoprotein C. It shields the hydrophobic fusion loops of the glycoprotein C, preventing premature fusion. The glycoprotein protrusions are arranged on an icosahedral lattice, with T=12 triangulation. They are able to attach the virion to the host cell receptor CD209/DC-SIGN and to promote fusion of membranes with the late endosome after endocytosis of the virion. Plays a role in the packaging of ribonucleoproteins and polymerase during virus assembly. Functionally, structural component of the virion that interacts with glycoprotein N. Acts as a class II fusion protein that is activated upon acidification and subsequent repositioning of the glycoprotein N. The glycoprotein protrusions are arranged on an icosahedral lattice, with T=12 triangulation. They are able to attach the virion to the host cell receptor CD209/DC-SIGN and to promote fusion of membranes with the late endosome after endocytosis of the virion. Its function is as follows. Plays a role in the inhibition of virus-induced apoptosis. Plays a role for virus dissemination in vertebrates. Plays a role for virus dissemination in mosquitoes. May act as a structural virion protein in insects. In Rift valley fever virus (strain ZH-548 M12) (RVFV), this protein is Envelopment polyprotein (GP).